We begin with the raw amino-acid sequence, 206 residues long: Uridine kinase (206 aa).

Residue 9–16 participates in ATP binding; it reads GGSGSGKT.

It belongs to the uridine kinase family.

The protein resides in the cytoplasm. The enzyme catalyses uridine + ATP = UMP + ADP + H(+). The catalysed reaction is cytidine + ATP = CMP + ADP + H(+). The protein operates within pyrimidine metabolism; CTP biosynthesis via salvage pathway; CTP from cytidine: step 1/3. Its pathway is pyrimidine metabolism; UMP biosynthesis via salvage pathway; UMP from uridine: step 1/1. This chain is Uridine kinase, found in Borrelia duttonii (strain Ly).